Reading from the N-terminus, the 423-residue chain is Glutamate-1-semialdehyde 2,1-aminomutase (423 aa).

N6-(pyridoxal phosphate)lysine is present on K266.

Belongs to the class-III pyridoxal-phosphate-dependent aminotransferase family. HemL subfamily. As to quaternary structure, homodimer. The cofactor is pyridoxal 5'-phosphate.

The protein localises to the cytoplasm. The catalysed reaction is (S)-4-amino-5-oxopentanoate = 5-aminolevulinate. It functions in the pathway porphyrin-containing compound metabolism; protoporphyrin-IX biosynthesis; 5-aminolevulinate from L-glutamyl-tRNA(Glu): step 2/2. The polypeptide is Glutamate-1-semialdehyde 2,1-aminomutase (Nitratidesulfovibrio vulgaris (strain ATCC 29579 / DSM 644 / CCUG 34227 / NCIMB 8303 / VKM B-1760 / Hildenborough) (Desulfovibrio vulgaris)).